A 246-amino-acid chain; its full sequence is Large ribosomal subunit protein uL3 (246 aa).

Disordered stretches follow at residues 140-162 (SHRS…NKKM) and 214-246 (ADVP…EENA). At glutamine 151 the chain carries N5-methylglutamine. A compositionally biased stretch (low complexity) spans 234-246 (EAAPEAPASEENA).

It belongs to the universal ribosomal protein uL3 family. As to quaternary structure, part of the 50S ribosomal subunit. Forms a cluster with proteins L14 and L19. In terms of processing, methylated by PrmB.

In terms of biological role, one of the primary rRNA binding proteins, it binds directly near the 3'-end of the 23S rRNA, where it nucleates assembly of the 50S subunit. This chain is Large ribosomal subunit protein uL3, found in Methylorubrum extorquens (strain CM4 / NCIMB 13688) (Methylobacterium extorquens).